A 340-amino-acid polypeptide reads, in one-letter code: Phosphate acyltransferase (340 aa).

The segment at 285–340 (WRQSGRPARHRGQEPRRHRQPRFWLCHRRGRRRSPRQRNRTHPGTGQPPAGCAGAR) is disordered. Residues 300 to 325 (RRHRQPRFWLCHRRGRRRSPRQRNRT) are compositionally biased toward basic residues.

It belongs to the PlsX family. In terms of assembly, homodimer. Probably interacts with PlsY.

It localises to the cytoplasm. It carries out the reaction a fatty acyl-[ACP] + phosphate = an acyl phosphate + holo-[ACP]. It functions in the pathway lipid metabolism; phospholipid metabolism. In terms of biological role, catalyzes the reversible formation of acyl-phosphate (acyl-PO(4)) from acyl-[acyl-carrier-protein] (acyl-ACP). This enzyme utilizes acyl-ACP as fatty acyl donor, but not acyl-CoA. This Laribacter hongkongensis (strain HLHK9) protein is Phosphate acyltransferase.